Reading from the N-terminus, the 256-residue chain is Coiled-coil domain-containing protein 90B, mitochondrial (256 aa).

The N-terminal 42 residues, 1–42 (MRNRWIWRFLRPECSGIRWISSPHGRLSPALRRGFLTTTTKS), are a transit peptide targeting the mitochondrion. Residues 106–164 (AQQEITIQQLMAHLDSIRKDMVILEKSEFANLRAENEKMKIELDQVKQQLINETSRIRA) are a coiled coil. A helical transmembrane segment spans residues 231–253 (TIRYLAASVFTCLAIALGFYRFW).

This sequence belongs to the CCDC90 family. In terms of assembly, interacts with MCU.

It is found in the mitochondrion membrane. The chain is Coiled-coil domain-containing protein 90B, mitochondrial (Ccdc90b) from Rattus norvegicus (Rat).